A 185-amino-acid chain; its full sequence is Iron-sulfur assembly protein 2 (185 aa).

Fe cation-binding residues include C89, C175, and C177.

The protein belongs to the HesB/IscA family.

Its subcellular location is the mitochondrion matrix. In terms of biological role, involved in the assembly of mitochondrial and cytoplasmic iron-sulfur proteins. Probably involved in the binding of an intermediate of Fe/S cluster assembly. The protein is Iron-sulfur assembly protein 2 (ISA2) of Saccharomyces cerevisiae (strain ATCC 204508 / S288c) (Baker's yeast).